A 302-amino-acid chain; its full sequence is Homoserine kinase (302 aa).

92–102 (PLARGLGSSAT) provides a ligand contact to ATP.

Belongs to the GHMP kinase family. Homoserine kinase subfamily.

It is found in the cytoplasm. It carries out the reaction L-homoserine + ATP = O-phospho-L-homoserine + ADP + H(+). The protein operates within amino-acid biosynthesis; L-threonine biosynthesis; L-threonine from L-aspartate: step 4/5. Catalyzes the ATP-dependent phosphorylation of L-homoserine to L-homoserine phosphate. This Trichormus variabilis (strain ATCC 29413 / PCC 7937) (Anabaena variabilis) protein is Homoserine kinase.